The following is a 56-amino-acid chain: Large ribosomal subunit protein bL33 (56 aa).

Belongs to the bacterial ribosomal protein bL33 family.

The polypeptide is Large ribosomal subunit protein bL33 (Haemophilus influenzae (strain 86-028NP)).